The chain runs to 780 residues: E3 UFM1-protein ligase 1 homolog (780 aa).

Residues S403–T413 are compositionally biased toward polar residues. Disordered regions lie at residues S403–I458 and S734–L760. Basic and acidic residues-rich tracts occupy residues K443–I458 and D736–D750.

Belongs to the UFL1 family.

Its function is as follows. E3 UFM1-protein ligase that mediates ufmylation of target proteins. The protein is E3 UFM1-protein ligase 1 homolog of Trichoplax adhaerens (Trichoplax reptans).